The following is a 113-amino-acid chain: Hydrogenase maturation factor HypA (113 aa).

Histidine 2 is a binding site for Ni(2+). Zn(2+)-binding residues include cysteine 73, cysteine 75, cysteine 89, and cysteine 92.

It belongs to the HypA/HybF family.

In terms of biological role, involved in the maturation of [NiFe] hydrogenases. Required for nickel insertion into the metal center of the hydrogenase. The protein is Hydrogenase maturation factor HypA of Methanocella arvoryzae (strain DSM 22066 / NBRC 105507 / MRE50).